The primary structure comprises 1258 residues: Phospholipid-transporting ATPase C887.12 (1258 aa).

Disordered regions lie at residues 1–41 and 53–83; these read MARD…LGED and YISS…SKAN. Over 1–183 the chain is Cytoplasmic; that stretch reads MARDVDNKQN…PKFLKEQFSK (183 aa). The segment covering 53–64 has biased composition (polar residues); that stretch reads YISSSGQNSTNP. Residues 184 to 204 traverse the membrane as a helical segment; the sequence is YANLFFLFTAVVQQIPGITPV. Over 205-208 the chain is Lumenal; sequence NRYT. A helical membrane pass occupies residues 209-229; it reads TIGPMLIVLSVSGIKEIMEDI. Residues 230–406 are Cytoplasmic-facing; the sequence is KRKKQDQELN…TSVEKQVNSQ (177 aa). Residues 407-427 traverse the membrane as a helical segment; the sequence is ILFLLCIFVFLCFASSLGALI. The Lumenal portion of the chain corresponds to 428-451; it reads HRSVYGSALSYVKYTSNRAGMFFK. Residues 452–472 form a helical membrane-spanning segment; the sequence is GLLTFWILYSNLVPISLFVTF. Over 473 to 974 the chain is Cytoplasmic; that stretch reads ELVRYIQAQL…KLILYSFYKN (502 aa). The active-site 4-aspartylphosphate intermediate is Asp518. Residues Asp518, Lys519, Thr520, Glu613, Phe654, Ser656, Lys659, Lys677, Arg710, Thr711, Thr790, Gly791, Asp792, Arg883, and Lys889 each contribute to the ATP site. Residue Asp518 coordinates Mg(2+). Thr520 is a binding site for Mg(2+). Asp909 lines the Mg(2+) pocket. Residues Asn912 and Asp913 each coordinate ATP. Position 913 (Asp913) interacts with Mg(2+). Residues 975 to 995 form a helical membrane-spanning segment; it reads IALYMTQFWYAFCNAFSGQVI. Topologically, residues 996 to 998 are lumenal; it reads FES. Residues 999–1019 form a helical membrane-spanning segment; that stretch reads WSISLYNVLFTVLPPVVIGIF. Residues 1020-1051 lie on the Cytoplasmic side of the membrane; that stretch reads DQFVSAGQLFQYPQLYQLGQRSEFFNLKRFWS. Residues 1052-1072 form a helical membrane-spanning segment; it reads WITNGFYHSLLLFLCSIAVFY. The Lumenal segment spans residues 1073–1086; sequence YDGPNKDGLASGHW. Residues 1087-1107 traverse the membrane as a helical segment; the sequence is VWGTTLYAAILATVLGKAALI. Lys1103 lines the a 1,2-diacyl-sn-glycero-3-phospho-(1D-myo-inositol 4-phosphate) pocket. Topologically, residues 1108–1115 are cytoplasmic; sequence SNHWTQYT. The chain crosses the membrane as a helical span at residues 1116 to 1136; that stretch reads VIATLGSFLLWIVFMPIYAVA. The Lumenal segment spans residues 1137-1148; that stretch reads APAIGFSKEYYG. Residues 1149-1169 form a helical membrane-spanning segment; sequence IIPHLYGNLKFWASLLVLPTI. Over 1170 to 1258 the chain is Cytoplasmic; sequence ALMRDFVWKY…HTRGAYGEMR (89 aa). The a 1,2-diacyl-sn-glycero-3-phospho-(1D-myo-inositol 4-phosphate) site is built by Arg1173, Trp1177, Lys1178, Tyr1189, and His1190.

Belongs to the cation transport ATPase (P-type) (TC 3.A.3) family. Type IV subfamily. Mg(2+) is required as a cofactor.

The protein localises to the endoplasmic reticulum membrane. It localises to the golgi apparatus. Its subcellular location is the trans-Golgi network membrane. The enzyme catalyses ATP + H2O + phospholipidSide 1 = ADP + phosphate + phospholipidSide 2.. The catalysed reaction is a 1,2-diacyl-sn-glycero-3-phospho-L-serine(out) + ATP + H2O = a 1,2-diacyl-sn-glycero-3-phospho-L-serine(in) + ADP + phosphate + H(+). It carries out the reaction a 1,2-diacyl-sn-glycero-3-phosphoethanolamine(out) + ATP + H2O = a 1,2-diacyl-sn-glycero-3-phosphoethanolamine(in) + ADP + phosphate + H(+). In terms of biological role, catalytic component of a P4-ATPase flippase complex which catalyzes the hydrolysis of ATP coupled to the transport of phosphatidylserine and small amounts of ethanolamine from the lumen to the cytosolic leaflet of the trans-Golgi network and ensures the maintenance of asymmetric distribution of phospholipids. The sequence is that of Phospholipid-transporting ATPase C887.12 from Schizosaccharomyces pombe (strain 972 / ATCC 24843) (Fission yeast).